Here is a 220-residue protein sequence, read N- to C-terminus: N-(5'-phosphoribosyl)anthranilate isomerase (220 aa).

It belongs to the TrpF family.

The enzyme catalyses N-(5-phospho-beta-D-ribosyl)anthranilate = 1-(2-carboxyphenylamino)-1-deoxy-D-ribulose 5-phosphate. It participates in amino-acid biosynthesis; L-tryptophan biosynthesis; L-tryptophan from chorismate: step 3/5. This Agrobacterium fabrum (strain C58 / ATCC 33970) (Agrobacterium tumefaciens (strain C58)) protein is N-(5'-phosphoribosyl)anthranilate isomerase.